The primary structure comprises 147 residues: Large ribosomal subunit protein uL11 (147 aa).

This sequence belongs to the universal ribosomal protein uL11 family. As to quaternary structure, part of the ribosomal stalk of the 50S ribosomal subunit. Interacts with L10 and the large rRNA to form the base of the stalk. L10 forms an elongated spine to which L12 dimers bind in a sequential fashion forming a multimeric L10(L12)X complex. In terms of processing, one or more lysine residues are methylated.

In terms of biological role, forms part of the ribosomal stalk which helps the ribosome interact with GTP-bound translation factors. This Metamycoplasma arthritidis (strain 158L3-1) (Mycoplasma arthritidis) protein is Large ribosomal subunit protein uL11.